The following is a 128-amino-acid chain: Small ribosomal subunit protein uS14m (128 aa).

The protein belongs to the universal ribosomal protein uS14 family. Component of the mitochondrial ribosome small subunit (28S) which comprises a 12S rRNA and about 30 distinct proteins. Interacts with LIAT1.

The protein localises to the mitochondrion. The polypeptide is Small ribosomal subunit protein uS14m (MRPS14) (Bos taurus (Bovine)).